The primary structure comprises 97 residues: Co-chaperonin GroES (97 aa).

The protein belongs to the GroES chaperonin family. Heptamer of 7 subunits arranged in a ring. Interacts with the chaperonin GroEL.

It is found in the cytoplasm. Its function is as follows. Together with the chaperonin GroEL, plays an essential role in assisting protein folding. The GroEL-GroES system forms a nano-cage that allows encapsulation of the non-native substrate proteins and provides a physical environment optimized to promote and accelerate protein folding. GroES binds to the apical surface of the GroEL ring, thereby capping the opening of the GroEL channel. This is Co-chaperonin GroES from Buchnera aphidicola subsp. Thelaxes suberi.